The primary structure comprises 616 residues: Dihydroxy-acid dehydratase (616 aa).

D81 contacts Mg(2+). Residue C122 participates in [2Fe-2S] cluster binding. Mg(2+) contacts are provided by D123 and K124. K124 is subject to N6-carboxylysine. C195 is a binding site for [2Fe-2S] cluster. Mg(2+) is bound at residue E491. Catalysis depends on S517, which acts as the Proton acceptor.

Belongs to the IlvD/Edd family. As to quaternary structure, homodimer. Requires [2Fe-2S] cluster as cofactor. Mg(2+) serves as cofactor.

It carries out the reaction (2R)-2,3-dihydroxy-3-methylbutanoate = 3-methyl-2-oxobutanoate + H2O. It catalyses the reaction (2R,3R)-2,3-dihydroxy-3-methylpentanoate = (S)-3-methyl-2-oxopentanoate + H2O. Its pathway is amino-acid biosynthesis; L-isoleucine biosynthesis; L-isoleucine from 2-oxobutanoate: step 3/4. It functions in the pathway amino-acid biosynthesis; L-valine biosynthesis; L-valine from pyruvate: step 3/4. Functionally, functions in the biosynthesis of branched-chain amino acids. Catalyzes the dehydration of (2R,3R)-2,3-dihydroxy-3-methylpentanoate (2,3-dihydroxy-3-methylvalerate) into 2-oxo-3-methylpentanoate (2-oxo-3-methylvalerate) and of (2R)-2,3-dihydroxy-3-methylbutanoate (2,3-dihydroxyisovalerate) into 2-oxo-3-methylbutanoate (2-oxoisovalerate), the penultimate precursor to L-isoleucine and L-valine, respectively. In Escherichia coli O81 (strain ED1a), this protein is Dihydroxy-acid dehydratase.